Here is a 359-residue protein sequence, read N- to C-terminus: Probable cinnamyl alcohol dehydrogenase 8A (359 aa).

A Zn(2+)-binding site is contributed by Cys45. An NADP(+)-binding site is contributed by Thr47. Positions 67, 68, 98, 101, 104, 112, and 161 each coordinate Zn(2+). NADP(+)-binding positions include Thr165, 186–191 (GLGGLG), 209–214 (SSSPAK), Thr249, Gly273, and 296–298 (SGG).

It belongs to the zinc-containing alcohol dehydrogenase family. As to quaternary structure, homodimer. Zn(2+) serves as cofactor.

The enzyme catalyses (E)-cinnamyl alcohol + NADP(+) = (E)-cinnamaldehyde + NADPH + H(+). It catalyses the reaction (E)-coniferol + NADP(+) = (E)-coniferaldehyde + NADPH + H(+). It carries out the reaction (E)-sinapyl alcohol + NADP(+) = (E)-sinapaldehyde + NADPH + H(+). The catalysed reaction is (E)-4-coumaroyl alcohol + NADP(+) = (E)-4-coumaraldehyde + NADPH + H(+). The enzyme catalyses (E)-caffeyl alcohol + NADP(+) = (E)-caffeyl aldehyde + NADPH + H(+). The protein operates within aromatic compound metabolism; phenylpropanoid biosynthesis. Involved in lignin biosynthesis. Catalyzes the final step specific for the production of lignin monomers. Catalyzes the NADPH-dependent reduction of coniferaldehyde, 5-hydroxyconiferaldehyde, sinapaldehyde, 4-coumaraldehyde and caffeyl aldehyde to their respective alcohols. In Oryza sativa subsp. japonica (Rice), this protein is Probable cinnamyl alcohol dehydrogenase 8A.